Reading from the N-terminus, the 360-residue chain is Peptide chain release factor 1 (360 aa).

Q235 bears the N5-methylglutamine mark. Positions 284 to 313 (AKRQQAEASTRRNLLGSGDRSDRNRTYNFP) are disordered.

It belongs to the prokaryotic/mitochondrial release factor family. Post-translationally, methylated by PrmC. Methylation increases the termination efficiency of RF1.

Its subcellular location is the cytoplasm. Functionally, peptide chain release factor 1 directs the termination of translation in response to the peptide chain termination codons UAG and UAA. The sequence is that of Peptide chain release factor 1 from Escherichia coli (strain UTI89 / UPEC).